The primary structure comprises 164 residues: Lipoprotein signal peptidase (164 aa).

4 helical membrane passes run 6-26 (LGVL…LWLL), 39-59 (VLPF…GWFS), 65-85 (GQIL…IWMA), and 88-108 (TTKL…GNAI). Catalysis depends on residues Asp118 and Asp140. The helical transmembrane segment at 141-161 (VAIVVGVAALLYDSLIGLPAA) threads the bilayer.

Belongs to the peptidase A8 family.

The protein resides in the cell inner membrane. The catalysed reaction is Release of signal peptides from bacterial membrane prolipoproteins. Hydrolyzes -Xaa-Yaa-Zaa-|-(S,diacylglyceryl)Cys-, in which Xaa is hydrophobic (preferably Leu), and Yaa (Ala or Ser) and Zaa (Gly or Ala) have small, neutral side chains.. It functions in the pathway protein modification; lipoprotein biosynthesis (signal peptide cleavage). Functionally, this protein specifically catalyzes the removal of signal peptides from prolipoproteins. This chain is Lipoprotein signal peptidase, found in Rhodopseudomonas palustris (strain ATCC BAA-98 / CGA009).